A 55-amino-acid polypeptide reads, in one-letter code: uncharacterized protein (55 aa).

Residues 24 to 46 (LFIIFFTYSYYYCGFLQSFNYII) form a helical membrane-spanning segment.

The protein localises to the membrane. This is an uncharacterized protein from Dictyostelium discoideum (Social amoeba).